Consider the following 120-residue polypeptide: Large ribosomal subunit protein bL20 (120 aa).

It belongs to the bacterial ribosomal protein bL20 family.

Functionally, binds directly to 23S ribosomal RNA and is necessary for the in vitro assembly process of the 50S ribosomal subunit. It is not involved in the protein synthesizing functions of that subunit. In Ligilactobacillus salivarius (strain UCC118) (Lactobacillus salivarius), this protein is Large ribosomal subunit protein bL20.